Reading from the N-terminus, the 60-residue chain is Small, acid-soluble spore protein H 1 (60 aa).

A disordered region spans residues 39–60; it reads IHPLDNPNQKQSVPVASLEEHS.

The protein belongs to the SspH family.

The protein localises to the spore core. The protein is Small, acid-soluble spore protein H 1 of Geobacillus kaustophilus (strain HTA426).